A 239-amino-acid chain; its full sequence is 2-C-methyl-D-erythritol 4-phosphate cytidylyltransferase (239 aa).

Belongs to the IspD/TarI cytidylyltransferase family. IspD subfamily.

The enzyme catalyses 2-C-methyl-D-erythritol 4-phosphate + CTP + H(+) = 4-CDP-2-C-methyl-D-erythritol + diphosphate. It functions in the pathway isoprenoid biosynthesis; isopentenyl diphosphate biosynthesis via DXP pathway; isopentenyl diphosphate from 1-deoxy-D-xylulose 5-phosphate: step 2/6. Its function is as follows. Catalyzes the formation of 4-diphosphocytidyl-2-C-methyl-D-erythritol from CTP and 2-C-methyl-D-erythritol 4-phosphate (MEP). The polypeptide is 2-C-methyl-D-erythritol 4-phosphate cytidylyltransferase (Acinetobacter baylyi (strain ATCC 33305 / BD413 / ADP1)).